A 479-amino-acid chain; its full sequence is ATP synthase subunit beta (479 aa).

An ATP-binding site is contributed by 153–160; sequence GGAGVGKT.

It belongs to the ATPase alpha/beta chains family. F-type ATPases have 2 components, CF(1) - the catalytic core - and CF(0) - the membrane proton channel. CF(1) has five subunits: alpha(3), beta(3), gamma(1), delta(1), epsilon(1). CF(0) has three main subunits: a(1), b(2) and c(9-12). The alpha and beta chains form an alternating ring which encloses part of the gamma chain. CF(1) is attached to CF(0) by a central stalk formed by the gamma and epsilon chains, while a peripheral stalk is formed by the delta and b chains.

Its subcellular location is the cell membrane. The enzyme catalyses ATP + H2O + 4 H(+)(in) = ADP + phosphate + 5 H(+)(out). Its function is as follows. Produces ATP from ADP in the presence of a proton gradient across the membrane. The catalytic sites are hosted primarily by the beta subunits. In Lactobacillus delbrueckii subsp. bulgaricus (strain ATCC BAA-365 / Lb-18), this protein is ATP synthase subunit beta.